The following is a 232-amino-acid chain: MKERRAPQPVVARCKLVLVGDVQCGKTAMLQVLAKDCYPETYVPTVFENYTACLETEEQRVELSLWDTSGSPYYDNVRPLCYSDSDAVLLCFDISRPETVDSALKKWRTEILDYCPSTRVLLIGCKTDLRTDLSTLMELSHQKQAPISYEQGCAIAKQLGAEIYLEGSAFTSEKSIHSIFRTASMVCLNKPSPMPPKSPVRSLSKRLLHLPSRSELISSTFKKEKAKSCSIM.

GTP-binding positions include 23-28 (QCGKTA), 38-45 (YPETYVPT), 67-71 (DTSGS), 125-128 (CKTD), and 169-170 (AF). The Effector region signature appears at 42 to 50 (YVPTVFENY). C229 bears the Cysteine methyl ester mark. C229 carries S-geranylgeranyl cysteine lipidation. The propeptide at 230–232 (SIM) is removed in mature form.

This sequence belongs to the small GTPase superfamily. Rho family. In terms of assembly, binds GRB7 and PLXNB1. Interacts with PLXNA2. Interacts with UBXD5.

It localises to the cell membrane. It is found in the cytoplasm. Its subcellular location is the cytoskeleton. Lacks intrinsic GTPase activity. Has a low affinity for GDP, and constitutively binds GTP. Controls rearrangements of the actin cytoskeleton. Induces the Rac-dependent neuritic process formation in part by disruption of the cortical actin filaments. Causes the formation of many neuritic processes from the cell body with disruption of the cortical actin filaments. In Bos taurus (Bovine), this protein is Rho-related GTP-binding protein Rho6 (RND1).